The chain runs to 105 residues: Nucleoid-associated protein Lm4b_02677 (105 aa).

The span at 1 to 16 (MRGMGNMQGMMKQMQK) shows a compositional bias: low complexity. The disordered stretch occupies residues 1 to 23 (MRGMGNMQGMMKQMQKMQKEMAK).

Belongs to the YbaB/EbfC family. As to quaternary structure, homodimer.

The protein resides in the cytoplasm. It localises to the nucleoid. Binds to DNA and alters its conformation. May be involved in regulation of gene expression, nucleoid organization and DNA protection. This Listeria monocytogenes serotype 4b (strain CLIP80459) protein is Nucleoid-associated protein Lm4b_02677.